The primary structure comprises 306 residues: Ornithine carbamoyltransferase, anabolic (306 aa).

Residues 46–49, glutamine 73, arginine 97, and 124–127 contribute to the carbamoyl phosphate site; these read STRT and HPTQ. Residues asparagine 156, aspartate 220, and 224–225 each bind L-ornithine; that span reads SM. Carbamoyl phosphate is bound by residues 260-261 and arginine 288; that span reads CL.

It belongs to the aspartate/ornithine carbamoyltransferase superfamily. OTCase family. In terms of assembly, homohexamer; dimer of trimers.

The protein resides in the cytoplasm. The enzyme catalyses carbamoyl phosphate + L-ornithine = L-citrulline + phosphate + H(+). The protein operates within amino-acid biosynthesis; L-arginine biosynthesis; L-arginine from L-ornithine and carbamoyl phosphate: step 1/3. Its function is as follows. Reversibly catalyzes the transfer of the carbamoyl group from carbamoyl phosphate (CP) to the N(epsilon) atom of ornithine (ORN) to produce L-citrulline, which is a substrate for argininosuccinate synthetase (ArgG) involved in the final step in arginine biosynthesis. This is Ornithine carbamoyltransferase, anabolic from Campylobacter jejuni subsp. jejuni serotype O:2 (strain ATCC 700819 / NCTC 11168).